The chain runs to 225 residues: Germin-like protein 8-7 (225 aa).

A signal peptide spans 1-23 (MASPSSFCLLAVLLALVSWQAIA). Cys33 and Cys48 form a disulfide bridge. A Cupin type-1 domain is found at 63 to 213 (AMLDTPRKTN…AFQVEKGTID (151 aa)). Asn77 carries an N-linked (GlcNAc...) asparagine glycan. Residues His110, His112, and Glu117 each coordinate Mn(2+). An N-linked (GlcNAc...) asparagine glycan is attached at Asn136. His158 is a binding site for Mn(2+).

The protein belongs to the germin family. As to quaternary structure, oligomer (believed to be a pentamer but probably hexamer).

The protein resides in the secreted. The protein localises to the extracellular space. It is found in the apoplast. Functionally, plays a role in broad-spectrum disease resistance. Probably has no oxalate oxidase activity even if the active site is conserved. In Oryza sativa subsp. japonica (Rice), this protein is Germin-like protein 8-7 (GER6).